Consider the following 452-residue polypeptide: Metacaspase-1 (452 aa).

Positions 1–97 (MYPGAGRPTY…GPPLQGRPRD (97 aa)) are disordered. A compositionally biased stretch (low complexity) spans 16–41 (QKGPYGQPQYQQQYAPPYPERYQQPY). Catalysis depends on residues His-238 and Cys-294.

The protein belongs to the peptidase C14B family.

In terms of biological role, involved in cell death (apoptosis). The sequence is that of Metacaspase-1 (MCA1) from Eremothecium gossypii (strain ATCC 10895 / CBS 109.51 / FGSC 9923 / NRRL Y-1056) (Yeast).